The chain runs to 279 residues: Isopentenyl-diphosphate delta-isomerase idi1 (279 aa).

Residue K78 participates in substrate binding. Mg(2+) is bound by residues H82 and H93. Positions 91–249 constitute a Nudix hydrolase domain; the sequence is LLHRAFSVFL…GLKFTPWFKL (159 aa). Substrate-binding residues include Q111 and K116. The active site involves C128. A substrate-binding site is contributed by S129. The Nudix box motif lies at 129 to 162; the sequence is SHPLGIPGETGAELDAAVLGVKRAAQRKLDQELG. Mg(2+) is bound by residues E191 and E193. E193 is an active-site residue.

Belongs to the IPP isomerase type 1 family. Mg(2+) is required as a cofactor.

It catalyses the reaction isopentenyl diphosphate = dimethylallyl diphosphate. It participates in isoprenoid biosynthesis; dimethylallyl diphosphate biosynthesis; dimethylallyl diphosphate from isopentenyl diphosphate: step 1/1. Isopentenyl-diphosphate delta-isomerase; part of the second module of ergosterol biosynthesis pathway that includes the middle steps of the pathway. Idi1 catalyzes the 1,3-allylic rearrangement of isopentenyl (IPP) to its highly electrophilic allylic isomer, dimethylallyl diphosphate (DMAPP). The second module is carried out in the vacuole and involves the formation of farnesyl diphosphate, which is also an important intermediate in the biosynthesis of ubiquinone, dolichol, heme and prenylated proteins. Activity by the mevalonate kinase erg12 (AFUA_4G07780) first converts mevalonate into 5-phosphomevalonate. 5-phosphomevalonate is then further converted to 5-diphosphomevalonate by the phosphomevalonate kinase erg8 (AFUA_5G10680). The diphosphomevalonate decarboxylase mvd1 (AFUA_4G07130) then produces isopentenyl diphosphate. The isopentenyl-diphosphate delta-isomerase idi1 (AFUA_6G11160) then catalyzes the 1,3-allylic rearrangement of the homoallylic substrate isopentenyl (IPP) to its highly electrophilic allylic isomer, dimethylallyl diphosphate (DMAPP). Finally the farnesyl diphosphate synthase erg20 (AFUA_5G02450) catalyzes the sequential condensation of isopentenyl pyrophosphate with dimethylallyl pyrophosphate, and then with the resultant geranylpyrophosphate to the ultimate product farnesyl pyrophosphate. This Aspergillus fumigatus (strain ATCC MYA-4609 / CBS 101355 / FGSC A1100 / Af293) (Neosartorya fumigata) protein is Isopentenyl-diphosphate delta-isomerase idi1.